A 426-amino-acid polypeptide reads, in one-letter code: Gamma-glutamyl phosphate reductase (426 aa).

This sequence belongs to the gamma-glutamyl phosphate reductase family.

It localises to the cytoplasm. The enzyme catalyses L-glutamate 5-semialdehyde + phosphate + NADP(+) = L-glutamyl 5-phosphate + NADPH + H(+). It functions in the pathway amino-acid biosynthesis; L-proline biosynthesis; L-glutamate 5-semialdehyde from L-glutamate: step 2/2. Its function is as follows. Catalyzes the NADPH-dependent reduction of L-glutamate 5-phosphate into L-glutamate 5-semialdehyde and phosphate. The product spontaneously undergoes cyclization to form 1-pyrroline-5-carboxylate. This Paracidovorax citrulli (strain AAC00-1) (Acidovorax citrulli) protein is Gamma-glutamyl phosphate reductase.